The chain runs to 475 residues: Ribosomal protein uS12 methylthiotransferase RimO (475 aa).

One can recognise an MTTase N-terminal domain in the interval N36–K150. C45, C81, C113, C185, C189, and C192 together coordinate [4Fe-4S] cluster. In terms of domain architecture, Radical SAM core spans S171 to K403. The TRAM domain occupies K406–I475.

Belongs to the methylthiotransferase family. RimO subfamily. [4Fe-4S] cluster serves as cofactor.

The protein resides in the cytoplasm. It carries out the reaction L-aspartate(89)-[ribosomal protein uS12]-hydrogen + (sulfur carrier)-SH + AH2 + 2 S-adenosyl-L-methionine = 3-methylsulfanyl-L-aspartate(89)-[ribosomal protein uS12]-hydrogen + (sulfur carrier)-H + 5'-deoxyadenosine + L-methionine + A + S-adenosyl-L-homocysteine + 2 H(+). Its function is as follows. Catalyzes the methylthiolation of an aspartic acid residue of ribosomal protein uS12. The chain is Ribosomal protein uS12 methylthiotransferase RimO from Protochlamydia amoebophila (strain UWE25).